A 262-amino-acid polypeptide reads, in one-letter code: F-actin-capping protein subunit alpha (262 aa).

Belongs to the F-actin-capping protein alpha subunit family. Heterodimer of an alpha and a beta subunit.

In terms of biological role, F-actin-capping proteins bind in a Ca(2+)-independent manner to the fast growing ends of actin filaments (barbed end) thereby blocking the exchange of subunits at these ends. Unlike other capping proteins (such as gelsolin and severin), these proteins do not sever actin filaments. In Candida glabrata (strain ATCC 2001 / BCRC 20586 / JCM 3761 / NBRC 0622 / NRRL Y-65 / CBS 138) (Yeast), this protein is F-actin-capping protein subunit alpha (CAP1).